We begin with the raw amino-acid sequence, 105 residues long: Large ribosomal subunit protein uL22 (105 aa).

It belongs to the universal ribosomal protein uL22 family. In terms of assembly, part of the 50S ribosomal subunit.

Functionally, this protein binds specifically to 23S rRNA; its binding is stimulated by other ribosomal proteins, e.g. L4, L17, and L20. It is important during the early stages of 50S assembly. It makes multiple contacts with different domains of the 23S rRNA in the assembled 50S subunit and ribosome. The globular domain of the protein is located near the polypeptide exit tunnel on the outside of the subunit, while an extended beta-hairpin is found that lines the wall of the exit tunnel in the center of the 70S ribosome. In Sulfurimonas denitrificans (strain ATCC 33889 / DSM 1251) (Thiomicrospira denitrificans (strain ATCC 33889 / DSM 1251)), this protein is Large ribosomal subunit protein uL22.